Here is a 197-residue protein sequence, read N- to C-terminus: Imidazoleglycerol-phosphate dehydratase (197 aa).

It belongs to the imidazoleglycerol-phosphate dehydratase family.

The protein resides in the cytoplasm. The enzyme catalyses D-erythro-1-(imidazol-4-yl)glycerol 3-phosphate = 3-(imidazol-4-yl)-2-oxopropyl phosphate + H2O. It functions in the pathway amino-acid biosynthesis; L-histidine biosynthesis; L-histidine from 5-phospho-alpha-D-ribose 1-diphosphate: step 6/9. The chain is Imidazoleglycerol-phosphate dehydratase from Erythrobacter litoralis (strain HTCC2594).